The following is a 769-amino-acid chain: Polyribonucleotide nucleotidyltransferase (769 aa).

Mg(2+) contacts are provided by Asp490 and Asp496. A KH domain is found at 557-616 (PKIDTIMIPVDKIKVVIGKGGEQIDKIIAETGVKIDIDDEGLCSIFSSDQSAIDRAKEII). The S1 motif domain occupies 626-694 (GEVYEAKVVR…DKGRVDASMR (69 aa)). Positions 700–734 (PEGYVEPERKPRERRDNKDRRNGNGFDRRNNDRNN) are enriched in basic and acidic residues. Residues 700–769 (PEGYVEPERK…FPELSTKKPE (70 aa)) are disordered. Positions 736–746 (NNHNNNSGNHS) are enriched in low complexity. The span at 747–769 (FELRERKSHVDHEFPELSTKKPE) shows a compositional bias: basic and acidic residues.

Belongs to the polyribonucleotide nucleotidyltransferase family. Mg(2+) is required as a cofactor.

It is found in the cytoplasm. It catalyses the reaction RNA(n+1) + phosphate = RNA(n) + a ribonucleoside 5'-diphosphate. Its function is as follows. Involved in mRNA degradation. Catalyzes the phosphorolysis of single-stranded polyribonucleotides processively in the 3'- to 5'-direction. This chain is Polyribonucleotide nucleotidyltransferase, found in Lactococcus lactis subsp. cremoris (strain SK11).